The chain runs to 318 residues: Pantothenate kinase (318 aa).

Position 96–103 (96–103 (GSVAVGKS)) interacts with ATP.

The protein belongs to the prokaryotic pantothenate kinase family.

Its subcellular location is the cytoplasm. The catalysed reaction is (R)-pantothenate + ATP = (R)-4'-phosphopantothenate + ADP + H(+). Its pathway is cofactor biosynthesis; coenzyme A biosynthesis; CoA from (R)-pantothenate: step 1/5. This chain is Pantothenate kinase, found in Coxiella burnetii (strain CbuK_Q154) (Coxiella burnetii (strain Q154)).